A 282-amino-acid chain; its full sequence is 4-hydroxy-tetrahydrodipicolinate reductase (282 aa).

12–17 lines the NAD(+) pocket; that stretch reads GVTGRM. An NADP(+)-binding site is contributed by arginine 44. Residues 107 to 109 and 131 to 134 contribute to the NAD(+) site; these read GTT and SSNF. The active-site Proton donor/acceptor is the histidine 164. Histidine 165 is a (S)-2,3,4,5-tetrahydrodipicolinate binding site. Lysine 168 serves as the catalytic Proton donor. 174–175 contributes to the (S)-2,3,4,5-tetrahydrodipicolinate binding site; sequence GT.

Belongs to the DapB family. As to quaternary structure, homotetramer.

It localises to the cytoplasm. It carries out the reaction (S)-2,3,4,5-tetrahydrodipicolinate + NAD(+) + H2O = (2S,4S)-4-hydroxy-2,3,4,5-tetrahydrodipicolinate + NADH + H(+). The catalysed reaction is (S)-2,3,4,5-tetrahydrodipicolinate + NADP(+) + H2O = (2S,4S)-4-hydroxy-2,3,4,5-tetrahydrodipicolinate + NADPH + H(+). The protein operates within amino-acid biosynthesis; L-lysine biosynthesis via DAP pathway; (S)-tetrahydrodipicolinate from L-aspartate: step 4/4. Catalyzes the conversion of 4-hydroxy-tetrahydrodipicolinate (HTPA) to tetrahydrodipicolinate. The polypeptide is 4-hydroxy-tetrahydrodipicolinate reductase (Blochmanniella pennsylvanica (strain BPEN)).